A 399-amino-acid chain; its full sequence is Yellow-related salivary protein LJM11 (399 aa).

An N-terminal signal peptide occupies residues 1 to 18 (MKVFFSIFTLVLFQGTLG). A disulfide bridge connects residues C115 and C186. A glycan (N-linked (GlcNAc...) asparagine) is linked at N213. C319 and C395 are oxidised to a cystine. Residues T345, N360, and F362 each contribute to the serotonin site.

Belongs to the major royal jelly protein family. As to expression, salivary gland (at protein level).

The protein localises to the secreted. In terms of biological role, probably modulates blood feeding of sand flies on vertebrate species by binding and sequestering different mediators involved in the host response. Binds biogenic amines. Binds serotonin with high affinity. Binds adrenaline and noradrenaline. Binds dopamine and octopamine. Poorly binds histamine. Induces a delayed type hypersensitivity response in host tissues. Induces systemic Th1 immune response in the host. Immunogenic; elicits antibody production in the host. Functions as a chemoattractant for host neutrophils; likely acts through a G-protein-coupled receptor and effect is dependent on calcium influx. Functionally, (Microbial infection) Modulates infection caused by Leishmania species in the host. The protein is Yellow-related salivary protein LJM11 of Lutzomyia longipalpis (Sand fly).